We begin with the raw amino-acid sequence, 450 residues long: Chromosomal replication initiator protein DnaA (450 aa).

The tract at residues 1 to 84 is domain I, interacts with DnaA modulators; the sequence is MTENEQIFWN…AVDYVYEEDL (84 aa). A domain II region spans residues 84 to 109; sequence LIIEQQHQGQQGYTEQAFQQLPAVQS. Positions 110–328 are domain III, AAA+ region; the sequence is DLNPKYSFDN…GALKDISLVA (219 aa). ATP-binding residues include Gly154, Gly156, Lys157, and Thr158. Positions 329 to 450 are domain IV, binds dsDNA; the sequence is NFKQIDTITV…EIETIKNKIK (122 aa).

The protein belongs to the DnaA family. In terms of assembly, oligomerizes as a right-handed, spiral filament on DNA at oriC.

It is found in the cytoplasm. Its function is as follows. Plays an essential role in the initiation and regulation of chromosomal replication. ATP-DnaA binds to the origin of replication (oriC) to initiate formation of the DNA replication initiation complex once per cell cycle. Binds the DnaA box (a 9 base pair repeat at the origin) and separates the double-stranded (ds)DNA. Forms a right-handed helical filament on oriC DNA; dsDNA binds to the exterior of the filament while single-stranded (ss)DNA is stabiized in the filament's interior. The ATP-DnaA-oriC complex binds and stabilizes one strand of the AT-rich DNA unwinding element (DUE), permitting loading of DNA polymerase. After initiation quickly degrades to an ADP-DnaA complex that is not apt for DNA replication. Binds acidic phospholipids. The protein is Chromosomal replication initiator protein DnaA of Streptococcus equi subsp. zooepidemicus (strain MGCS10565).